The primary structure comprises 105 residues: Large ribosomal subunit protein eL42 (105 aa).

The disordered stretch occupies residues 23-61; that stretch reads KVTQYKKGKESKFAQGRRRYDRKQSGFGGQTKPIFRKKA.

The protein belongs to the eukaryotic ribosomal protein eL42 family.

This chain is Large ribosomal subunit protein eL42, found in Caenorhabditis elegans.